We begin with the raw amino-acid sequence, 136 residues long: Small ribosomal subunit protein uS8c (136 aa).

Belongs to the universal ribosomal protein uS8 family. Part of the 30S ribosomal subunit.

The protein resides in the plastid. It is found in the chloroplast. In terms of biological role, one of the primary rRNA binding proteins, it binds directly to 16S rRNA central domain where it helps coordinate assembly of the platform of the 30S subunit. The protein is Small ribosomal subunit protein uS8c (rps8) of Oryza sativa subsp. indica (Rice).